A 396-amino-acid chain; its full sequence is Tryptophan synthase beta chain (396 aa).

Residue lysine 88 is modified to N6-(pyridoxal phosphate)lysine.

Belongs to the TrpB family. In terms of assembly, tetramer of two alpha and two beta chains. It depends on pyridoxal 5'-phosphate as a cofactor.

It catalyses the reaction (1S,2R)-1-C-(indol-3-yl)glycerol 3-phosphate + L-serine = D-glyceraldehyde 3-phosphate + L-tryptophan + H2O. Its pathway is amino-acid biosynthesis; L-tryptophan biosynthesis; L-tryptophan from chorismate: step 5/5. In terms of biological role, the beta subunit is responsible for the synthesis of L-tryptophan from indole and L-serine. This is Tryptophan synthase beta chain from Shewanella sp. (strain ANA-3).